Reading from the N-terminus, the 282-residue chain is Shikimate dehydrogenase (NADP(+)) (282 aa).

Residues 19–21 and T66 contribute to the shikimate site; that span reads SFS. The Proton acceptor role is filled by K70. The shikimate site is built by N91 and D106. Residues 130-134, 152-157, T196, M200, and L224 contribute to the NADP(+) site; these read GAGGA and NRTVEK. Shikimate is bound at residue Y226. NADP(+) is bound at residue G247.

Belongs to the shikimate dehydrogenase family. In terms of assembly, homodimer.

It catalyses the reaction shikimate + NADP(+) = 3-dehydroshikimate + NADPH + H(+). Its pathway is metabolic intermediate biosynthesis; chorismate biosynthesis; chorismate from D-erythrose 4-phosphate and phosphoenolpyruvate: step 4/7. Involved in the biosynthesis of the chorismate, which leads to the biosynthesis of aromatic amino acids. Catalyzes the reversible NADPH linked reduction of 3-dehydroshikimate (DHSA) to yield shikimate (SA). This Methanocaldococcus jannaschii (strain ATCC 43067 / DSM 2661 / JAL-1 / JCM 10045 / NBRC 100440) (Methanococcus jannaschii) protein is Shikimate dehydrogenase (NADP(+)).